A 271-amino-acid polypeptide reads, in one-letter code: Ribosomal RNA small subunit methyltransferase A (271 aa).

S-adenosyl-L-methionine-binding residues include H11, L13, G38, E58, D86, and N101.

It belongs to the class I-like SAM-binding methyltransferase superfamily. rRNA adenine N(6)-methyltransferase family. RsmA subfamily.

It is found in the cytoplasm. It carries out the reaction adenosine(1518)/adenosine(1519) in 16S rRNA + 4 S-adenosyl-L-methionine = N(6)-dimethyladenosine(1518)/N(6)-dimethyladenosine(1519) in 16S rRNA + 4 S-adenosyl-L-homocysteine + 4 H(+). Specifically dimethylates two adjacent adenosines (A1518 and A1519) in the loop of a conserved hairpin near the 3'-end of 16S rRNA in the 30S particle. May play a critical role in biogenesis of 30S subunits. The sequence is that of Ribosomal RNA small subunit methyltransferase A from Helicobacter pylori (strain HPAG1).